A 209-amino-acid polypeptide reads, in one-letter code: Large ribosomal subunit protein uL3 (209 aa).

Belongs to the universal ribosomal protein uL3 family. As to quaternary structure, part of the 50S ribosomal subunit. Forms a cluster with proteins L14 and L19.

Its function is as follows. One of the primary rRNA binding proteins, it binds directly near the 3'-end of the 23S rRNA, where it nucleates assembly of the 50S subunit. This is Large ribosomal subunit protein uL3 from Nitratidesulfovibrio vulgaris (strain ATCC 29579 / DSM 644 / CCUG 34227 / NCIMB 8303 / VKM B-1760 / Hildenborough) (Desulfovibrio vulgaris).